Consider the following 135-residue polypeptide: Probable disulfide formation protein (135 aa).

The chain crosses the membrane as a helical span at residues 7-26 (SYCLYFAWLVSCIGTLMSVY). A disulfide bridge links cysteine 36 with cysteine 39. Transmembrane regions (helical) follow at residues 41–60 (YQRI…AYLD) and 67–84 (YALP…YQVC). Cysteine 96 and cysteine 101 are joined by a disulfide. A helical membrane pass occupies residues 109–131 (GFITMPMASALAFFAIANLLIFA).

Belongs to the DsbB family. BdbC subfamily.

It is found in the cell inner membrane. Required for disulfide bond formation in some proteins. This chain is Probable disulfide formation protein, found in Chlamydia muridarum (strain MoPn / Nigg).